The chain runs to 530 residues: Inactive ubiquitin carboxyl-terminal hydrolase 17-like protein 4 (530 aa).

The USP domain occupies 80-375; that stretch reads AGLQNMGNTC…QAYVLFYIQK (296 aa). Positions 382 to 392 are enriched in basic and acidic residues; sequence SESVSRGREPR. Disordered regions lie at residues 382–410 and 493–530; these read SESV…ELKR and NSTD…LVCQ. The segment covering 495-510 has biased composition (polar residues); that stretch reads TDQESMNTGTLASLQG. Basic residues predominate over residues 511 to 524; that stretch reads RTRRSKGKNKHSKR.

The protein belongs to the peptidase C19 family. USP17 subfamily.

The protein localises to the nucleus. It is found in the endoplasmic reticulum. This Homo sapiens (Human) protein is Inactive ubiquitin carboxyl-terminal hydrolase 17-like protein 4 (USP17L4).